The chain runs to 297 residues: PIH1 domain-containing protein 1 (297 aa).

The protein belongs to the PIH1 family.

It is found in the nucleus. Its function is as follows. Involved in the assembly of C/D box small nucleolar ribonucleoprotein (snoRNP) particles. Recruits the SWI/SNF complex to the core promoter of rRNA genes and enhances pre-rRNA transcription. Mediates interaction of TELO2 with the R2TP complex which is necessary for the stability of MTOR and SMG1. Positively regulates the assembly and activity of the mTORC1 complex. The sequence is that of PIH1 domain-containing protein 1 (pih1d1) from Xenopus laevis (African clawed frog).